The chain runs to 390 residues: Lipid droplet-regulating VLDL assembly factor AUP1 homolog (390 aa).

Residues 1–32 (MASPEASSSGNTEDLRIEDLFHQKRNEDTIAK) lie on the Cytoplasmic side of the membrane. Residues 33–53 (IFSIIYAPVGLIILLIRVFLG) lie within the membrane without spanning it. Residues 54-390 (FHTFIVACLL…NRQKYMNRDS (337 aa)) lie on the Cytoplasmic side of the membrane. The CUE domain maps to 305 to 347 (QMDECAMRIKQSFPSFHLSAIRRDLEKTRSQTTTVNNLKAGKI).

It belongs to the AUP1 family.

Its subcellular location is the endoplasmic reticulum membrane. It localises to the lipid droplet. The chain is Lipid droplet-regulating VLDL assembly factor AUP1 homolog from Caenorhabditis elegans.